Here is a 553-residue protein sequence, read N- to C-terminus: MRKIQAKKGLSIECKGWEQEAVLRMLYNNLDPEVAERPEDLVVYGGIGKAARNWEAFEAIEKTLRELESDETMLVQSGKPVAVFKTHEEAPRVLISNSVLVPEWANWDHFNELDKKGLIMYGQMTAGSWIYIGSQGIVQGTYETFAELGNQHFNGDLAGTVTLTAGLGGMGGAQPLAITMNHGVAICVDVDETRVDKRIDTKYCDVKTADLDEALKLAEEAKERGEGLSIGLVGNAVDIHQAILEKGFKIDIITDQTSAHDPLNGYVPQGYSVEEAKVLREKDPKKYVELSQASMAKHVELMLEFQKRGAVAFDYGNNIRQVAFNNGVKNAFDFPGFVPAYIRPLFCEGKGPFRFAALSGDPKDIERADEEMRKLFPENEKLLRWLDLAEEKISYQGLPSRIAWLGYGERAKMGLALNRLVRDGEISAPIVIGRDHLDAGSVASPNRETESMKDGSDAVGDWAVLNALINTAAGGSWISFHHGGGVGMGYSLHAGMVVVADGSERAERRLERVLTTDPGMGVARHVDAGYDIAIQTAKEKGIHIPMIDKAGDK.

NAD(+) contacts are provided by residues 45-46 (GG), Gln123, 169-171 (GMG), Asp189, Arg194, 235-236 (NA), 256-260 (QTSAH), 266-267 (YV), Tyr315, and Gly485.

Belongs to the urocanase family. Requires NAD(+) as cofactor.

It is found in the cytoplasm. It carries out the reaction 4-imidazolone-5-propanoate = trans-urocanate + H2O. It functions in the pathway amino-acid degradation; L-histidine degradation into L-glutamate; N-formimidoyl-L-glutamate from L-histidine: step 2/3. Its function is as follows. Catalyzes the conversion of urocanate to 4-imidazolone-5-propionate. This Staphylococcus aureus (strain COL) protein is Urocanate hydratase.